The primary structure comprises 333 residues: D-fructose 1,6-bisphosphatase class 2/sedoheptulose 1,7-bisphosphatase (333 aa).

Mn(2+)-binding residues include aspartate 33, glutamate 57, aspartate 85, and glutamate 88. Residues 88-90, tyrosine 119, 164-166, and 186-188 each bind substrate; these read EGT, RAR, and DGD. Glutamate 213 is a binding site for Mn(2+).

It belongs to the FBPase class 2 family. In terms of assembly, homotetramer. Mn(2+) is required as a cofactor.

It carries out the reaction beta-D-fructose 1,6-bisphosphate + H2O = beta-D-fructose 6-phosphate + phosphate. The catalysed reaction is D-sedoheptulose 1,7-bisphosphate + H2O = D-sedoheptulose 7-phosphate + phosphate. It participates in carbohydrate biosynthesis; Calvin cycle. Functionally, catalyzes the hydrolysis of fructose 1,6-bisphosphate (Fru 1,6-P2) and sedoheptulose 1,7-bisphosphate (Sed 1,7-P2) to fructose 6-phosphate and sedoheptulose 7-phosphate, respectively. In Prochlorococcus marinus (strain MIT 9515), this protein is D-fructose 1,6-bisphosphatase class 2/sedoheptulose 1,7-bisphosphatase.